Reading from the N-terminus, the 345-residue chain is MSCDMEKTMSSVDSLPATPASEVPVLTVSPADTSLNSADVKTQEVKPEEKKPAKKRKSWGQELPVPKTNLPPRKRAKTEDEKEQRRIERVLRNRAAAQTSRERKRLEMEKLENEKIQMEQQNQFLLQRLSQMEAENNRLSQQLAQLAAEVRGSRANTPMPGSPATASPTLTPTLFKQERDELPLERIPFPTPSLSDYSPTLKPSTLAESSDVAQHPAVSVAGLEGDGSALPLFDLGSDLKHHSTDDVAAPLSDDDFNRLFHGDSSVEPDSSVFEDGLAFDVLEGGDLSAFPFDSMVNFDSEPVTLEGIEMAHGLPDETTCKTSSVQPGFGASTTRCDGQGIAAGC.

Residues 1-106 (MSCDMEKTMS…AQTSRERKRL (106 aa)) are disordered. Residues 30-40 (PADTSLNSADV) show a composition bias toward polar residues. 2 stretches are compositionally biased toward basic and acidic residues: residues 41 to 51 (KTQEVKPEEKK) and 77 to 91 (KTEDEKEQRRIERVL). The bZIP domain maps to 83-146 (EQRRIERVLR…NRLSQQLAQL (64 aa)). Residues 85-138 (RRIERVLRNRAAAQTSRERKRLEMEKLENEKIQMEQQNQFLLQRLSQMEAENNR) are basic motif. The interval 139-146 (LSQQLAQL) is leucine-zipper. The disordered stretch occupies residues 186 to 210 (RIPFPTPSLSDYSPTLKPSTLAESS). The span at 192 to 210 (PSLSDYSPTLKPSTLAESS) shows a compositional bias: polar residues.

This sequence belongs to the bZIP family. In terms of assembly, homodimer.

It is found in the nucleus. In terms of biological role, transcriptional activator involved in the unfolded protein response (UPR) pathway. Recognizes and binds to the UPR element (UPRE) in the promoter of UPR-regulated genes. Increases the synthesis of endoplasmic reticulum-resident proteins required for protein folding as well as components of the secretory pathway. The protein is Transcriptional activator hacA (hacA) of Aspergillus oryzae (strain ATCC 42149 / RIB 40) (Yellow koji mold).